Consider the following 331-residue polypeptide: L-lactate dehydrogenase A chain (331 aa).

Residues 29–57 and Arg-98 contribute to the NAD(+) site; that span reads GMVG…MEDK. The substrate site is built by Arg-105, Asn-137, and Arg-168. Asn-137 serves as a coordination point for NAD(+). His-192 serves as the catalytic Proton acceptor. Thr-247 provides a ligand contact to substrate.

It belongs to the LDH/MDH superfamily. LDH family. As to quaternary structure, homotetramer.

Its subcellular location is the cytoplasm. It catalyses the reaction (S)-lactate + NAD(+) = pyruvate + NADH + H(+). Its pathway is fermentation; pyruvate fermentation to lactate; (S)-lactate from pyruvate: step 1/1. Functionally, interconverts simultaneously and stereospecifically pyruvate and lactate with concomitant interconversion of NADH and NAD(+). This is L-lactate dehydrogenase A chain (ldha) from Dissostichus mawsoni (Antarctic cod).